The primary structure comprises 393 residues: Phosphopentomutase (393 aa).

Positions 15, 288, 293, 329, 330, and 341 each coordinate Mn(2+).

Belongs to the phosphopentomutase family. Mn(2+) is required as a cofactor.

The protein resides in the cytoplasm. The catalysed reaction is 2-deoxy-alpha-D-ribose 1-phosphate = 2-deoxy-D-ribose 5-phosphate. It carries out the reaction alpha-D-ribose 1-phosphate = D-ribose 5-phosphate. It functions in the pathway carbohydrate degradation; 2-deoxy-D-ribose 1-phosphate degradation; D-glyceraldehyde 3-phosphate and acetaldehyde from 2-deoxy-alpha-D-ribose 1-phosphate: step 1/2. Functionally, isomerase that catalyzes the conversion of deoxy-ribose 1-phosphate (dRib-1-P) and ribose 1-phosphate (Rib-1-P) to deoxy-ribose 5-phosphate (dRib-5-P) and ribose 5-phosphate (Rib-5-P), respectively. This Halalkalibacterium halodurans (strain ATCC BAA-125 / DSM 18197 / FERM 7344 / JCM 9153 / C-125) (Bacillus halodurans) protein is Phosphopentomutase.